The chain runs to 792 residues: X-ray radiation resistance-associated protein 1 (792 aa).

LRR repeat units follow at residues 104–125 (DLCTINAKENDFKHFHSVIYIN), 141–155 (ALKELDLAFNGIKTI), 164–184 (LLEFLDLSFNSLTVEAICDLG), 188–209 (HLRVLLLTGNGLTSLPPNLAVA), 229–250 (ALETLMLDDNRLSNPSCFASLA), and 254–275 (RLKKLSLDENRIIRIPYLQQVQ). Disordered regions lie at residues 490-517 (AEDLPTTKSTSVESEMPTENLEGHSPSC), 537-562 (TLSHLSDTTVRLSPERPSDEDSKSTE), and 577-601 (IHKDDLELKEKDQKKPPTAPREVKG). The segment covering 549-560 (SPERPSDEDSKS) has biased composition (basic and acidic residues). Residues 723 to 745 (HKQYLEAKRLLKEFQARYRQLVS) are a coiled coil.

In terms of tissue distribution, expressed predominantly in testis followed by prostate and ovary. Low levels found in other tissues including peripheral blood leukocytes, spleen, thymus, small intestine and colon. Also expressed in neuroblastoma, glioma, breast, lung, leukemia, renal, ovarian, prostate and colorectal cancer cell lines.

It is found in the cytoplasm. It localises to the nucleus. May be involved in the response of cells to X-ray radiation. The chain is X-ray radiation resistance-associated protein 1 from Homo sapiens (Human).